The sequence spans 86 residues: Large ribosomal subunit protein bL27 (86 aa).

Positions 1 to 22 are disordered; the sequence is MATKKAGGSSRNGRDSAGRRLG.

The protein belongs to the bacterial ribosomal protein bL27 family.

This Rickettsia bellii (strain RML369-C) protein is Large ribosomal subunit protein bL27.